Reading from the N-terminus, the 88-residue chain is Small ribosomal subunit protein uS15c (88 aa).

This sequence belongs to the universal ribosomal protein uS15 family. As to quaternary structure, part of the 30S ribosomal subunit.

The protein resides in the plastid. The protein localises to the chloroplast. The polypeptide is Small ribosomal subunit protein uS15c (rps15) (Angiopteris evecta (Mule's foot fern)).